Here is a 367-residue protein sequence, read N- to C-terminus: Alanine racemase (367 aa).

Residue K34 is the Proton acceptor; specific for D-alanine of the active site. K34 bears the N6-(pyridoxal phosphate)lysine mark. R131 contacts substrate. Residue Y258 is the Proton acceptor; specific for L-alanine of the active site. M306 contributes to the substrate binding site.

It belongs to the alanine racemase family. The cofactor is pyridoxal 5'-phosphate.

It carries out the reaction L-alanine = D-alanine. It participates in amino-acid biosynthesis; D-alanine biosynthesis; D-alanine from L-alanine: step 1/1. Its function is as follows. Catalyzes the interconversion of L-alanine and D-alanine. May also act on other amino acids. The polypeptide is Alanine racemase (alr) (Corynebacterium efficiens (strain DSM 44549 / YS-314 / AJ 12310 / JCM 11189 / NBRC 100395)).